We begin with the raw amino-acid sequence, 476 residues long: Retinoic acid receptor gamma (476 aa).

The interval 1–109 is modulating; sequence MANSSKERLC…PPPPPRVYKP (109 aa). A compositionally biased stretch (low complexity) spans 81–96; that stretch reads STVETQSTSSEEMVPS. The interval 81-102 is disordered; sequence STVETQSTSSEEMVPSSPSPPP. NR C4-type zinc fingers lie at residues 110–130 and 146–170; these read CFVCNDKSSGYHYGVSSCEGC and CHRDKNCQINKVTRNRCQFCRLQKC. Residues 110-175 constitute a DNA-binding region (nuclear receptor); sequence CFVCNDKSSG…RLQKCFQVGM (66 aa). A hinge region spans residues 176–205; the sequence is SKEAVRNDRNKKKKEIKEEVVLPDSYEMPP. The Nuclear localization signal signature appears at 184–189; it reads RNKKKK. An NR LBD domain is found at 206-440; it reads EMEELIQKVS…PLIREMLENP (235 aa). Residues 435-476 form a disordered region; the sequence is EMLENPEAFEDGAATPKPSERSSSESSNGSPTGEDSSGSKTP. Polar residues predominate over residues 462–476; sequence NGSPTGEDSSGSKTP.

It belongs to the nuclear hormone receptor family. NR1 subfamily. As to quaternary structure, heterodimer; with a rxr molecule. Binds DNA preferentially as a rar/rxr heterodimer. In terms of tissue distribution, expressed in embryos, tadpoles and various adult tissue such as kidney, testis, brain, liver, skeletal muscle and spleen.

It localises to the nucleus. Receptor for retinoic acid. Retinoic acid receptors bind as heterodimers to their target response elements in response to their ligands, all-trans or 9-cis retinoic acid, and regulate gene expression in various biological processes. The rar/rxr heterodimers bind to the retinoic acid response elements (RARE) composed of tandem 5'-AGGTCA-3' sites known as DR1-DR5. The chain is Retinoic acid receptor gamma (rarg) from Xenopus laevis (African clawed frog).